The sequence spans 219 residues: MSLLNNKAGVISRLADFLGFRPKTGDIDVMNRQSVGSVTISQLAKGFYEPNIESAINDVHNFSIKDVGTIITNKTGVSPEGVSQTDYWAFSGTVTDDSLPPGSPITVLVFGLPVSATTGMTAIEFVAKVRVALQEAIASFTAINSYKDHPTDGSKLEVTYLDNQKHVLSTYSTYGITISQEIISESKPGYGTWNLLGAQTVTLDNQQTPTVFYHFERTA.

In terms of assembly, homotrimer. The gp11 trimer interacts with gp10 trimer and with the short tail fiber (STF) composed of the gp12 trimer. Part of the baseplate macromolecular complex which consists of gp5, gp5.4, gp27 (central spike complex); gp6, gp25, gp53 (inner baseplate); gp7, gp8 (intermediate baseplate); gp9, gp10, gp11, gp12 (peripheral); gp48 and gp54 (proximal region of the tail tube).

The protein localises to the virion. Its function is as follows. Baseplate protein that is part of the baseplate wedge and that connects the short tail fibers to the baseplate. Involved in the tail assembly. This Enterobacteria phage T4 (Bacteriophage T4) protein is Baseplate wedge protein gp11 (11).